Here is a 401-residue protein sequence, read N- to C-terminus: Coenzyme A biosynthesis bifunctional protein CoaBC (401 aa).

The segment at 1-190 is phosphopantothenoylcysteine decarboxylase; that stretch reads MQTLAGKKIL…FQPKPLQDKS (190 aa). Cysteine 159 functions as the Proton donor in the catalytic mechanism. The phosphopantothenate--cysteine ligase stretch occupies residues 191 to 401; the sequence is ILITAGPTRE…LKQIQTLMGH (211 aa). CTP-binding positions include aspartate 279, lysine 289, 307–310, phenylalanine 326, lysine 340, and lysine 344; that span reads PDIV.

This sequence in the N-terminal section; belongs to the HFCD (homo-oligomeric flavin containing Cys decarboxylase) superfamily. In the C-terminal section; belongs to the PPC synthetase family. Requires Mg(2+) as cofactor. It depends on FMN as a cofactor.

The catalysed reaction is N-[(R)-4-phosphopantothenoyl]-L-cysteine + H(+) = (R)-4'-phosphopantetheine + CO2. It carries out the reaction (R)-4'-phosphopantothenate + L-cysteine + CTP = N-[(R)-4-phosphopantothenoyl]-L-cysteine + CMP + diphosphate + H(+). It functions in the pathway cofactor biosynthesis; coenzyme A biosynthesis; CoA from (R)-pantothenate: step 2/5. Its pathway is cofactor biosynthesis; coenzyme A biosynthesis; CoA from (R)-pantothenate: step 3/5. In terms of biological role, catalyzes two sequential steps in the biosynthesis of coenzyme A. In the first step cysteine is conjugated to 4'-phosphopantothenate to form 4-phosphopantothenoylcysteine. In the second step the latter compound is decarboxylated to form 4'-phosphopantotheine. The sequence is that of Coenzyme A biosynthesis bifunctional protein CoaBC from Vibrio vulnificus (strain CMCP6).